A 317-amino-acid chain; its full sequence is Ricin B-like lectin EULS3 (317 aa).

The span at 1–11 shows a compositional bias: basic residues; that stretch reads MEHHHQHHRHH. A disordered region spans residues 1–157; sequence MEHHHQHHRH…YHKPDENRLP (157 aa). Residues 25 to 36 are compositionally biased toward pro residues; that stretch reads VPPPHVDAPPQP. Over residues 136–146 the composition is skewed to polar residues; sequence HSSNQPQSSSG. In terms of domain architecture, Ricin B-type lectin spans 168–315; the sequence is TVKVYSKAEP…KGDNQLWKIF (148 aa).

As to quaternary structure, interacts (via N-terminus) with ATS3A and ATS3B. As to expression, expressed in roots, rosette leaves, stems, cauline leaves and flowers.

It localises to the nucleus. It is found in the cytoplasm. Functionally, lectin which binds carbohydrates in vitro. Interacts through its lectin domain with glycan structures containing one or more Lewis X, Lewis Y or lactosamine motifs. May play a role in abiotic stress responses. May play a role in abscisic acid-induced stomatal closure. May play a role in disease resistance against Pseudomonas syringae through its involvement in stomatal movement. The chain is Ricin B-like lectin EULS3 from Arabidopsis thaliana (Mouse-ear cress).